The following is a 361-amino-acid chain: Phosphoserine aminotransferase (361 aa).

R43 serves as a coordination point for L-glutamate. Pyridoxal 5'-phosphate is bound by residues 77-78, W103, T153, D173, and Q196; that span reads AS. K197 bears the N6-(pyridoxal phosphate)lysine mark. 238 to 239 contributes to the pyridoxal 5'-phosphate binding site; the sequence is NT.

It belongs to the class-V pyridoxal-phosphate-dependent aminotransferase family. SerC subfamily. In terms of assembly, homodimer. Requires pyridoxal 5'-phosphate as cofactor.

It localises to the cytoplasm. The enzyme catalyses O-phospho-L-serine + 2-oxoglutarate = 3-phosphooxypyruvate + L-glutamate. It carries out the reaction 4-(phosphooxy)-L-threonine + 2-oxoglutarate = (R)-3-hydroxy-2-oxo-4-phosphooxybutanoate + L-glutamate. It participates in amino-acid biosynthesis; L-serine biosynthesis; L-serine from 3-phospho-D-glycerate: step 2/3. The protein operates within cofactor biosynthesis; pyridoxine 5'-phosphate biosynthesis; pyridoxine 5'-phosphate from D-erythrose 4-phosphate: step 3/5. In terms of biological role, catalyzes the reversible conversion of 3-phosphohydroxypyruvate to phosphoserine and of 3-hydroxy-2-oxo-4-phosphonooxybutanoate to phosphohydroxythreonine. The protein is Phosphoserine aminotransferase of Stutzerimonas stutzeri (Pseudomonas stutzeri).